A 147-amino-acid chain; its full sequence is Hemoglobin subunit beta (147 aa).

Valine 2 bears the N-acetylvaline mark. The Globin domain maps to 3–147 (HLTGDEKAAV…VANALAHKYH (145 aa)). Residue threonine 13 is modified to Phosphothreonine. Serine 45 carries the post-translational modification Phosphoserine. At lysine 60 the chain carries N6-acetyllysine. Position 64 (histidine 64) interacts with heme b. Position 83 is an N6-acetyllysine (lysine 83). Histidine 93 serves as a coordination point for heme b. Cysteine 94 bears the S-nitrosocysteine mark. N6-acetyllysine is present on lysine 145.

This sequence belongs to the globin family. Heterotetramer of two alpha chains and two beta chains. As to expression, red blood cells.

In terms of biological role, involved in oxygen transport from the lung to the various peripheral tissues. This chain is Hemoglobin subunit beta (HBB), found in Alouatta belzebul (Red-handed howler monkey).